The sequence spans 91 residues: Small ribosomal subunit protein uS19 (91 aa).

This sequence belongs to the universal ribosomal protein uS19 family.

Functionally, protein S19 forms a complex with S13 that binds strongly to the 16S ribosomal RNA. This chain is Small ribosomal subunit protein uS19, found in Prochlorococcus marinus (strain MIT 9303).